We begin with the raw amino-acid sequence, 142 residues long: Transcription antitermination protein NusB (142 aa).

The protein belongs to the NusB family.

Functionally, involved in transcription antitermination. Required for transcription of ribosomal RNA (rRNA) genes. Binds specifically to the boxA antiterminator sequence of the ribosomal RNA (rrn) operons. The protein is Transcription antitermination protein NusB of Borreliella burgdorferi (strain ATCC 35210 / DSM 4680 / CIP 102532 / B31) (Borrelia burgdorferi).